Here is a 131-residue protein sequence, read N- to C-terminus: MKLRGRKVVGGKAEGELIVSKKPLSFLGGVDPETGIVTDAESDIRGQSIAGKILAFPRGKGSTVGSYVIYALKKNGKAPKAIIVGEAETIVATGAIIAGIPMVQGIDVSKLKTGQRVRINADEGEVEVLDG.

The Proton acceptor role is filled by S62.

This sequence belongs to the AcnX type II small subunit family. Heterodimer composed of a large subunit (PMDh-L) and a small subunit (PMDh-S).

It carries out the reaction (R)-5-phosphomevalonate = (2E)-3-methyl-5-phosphooxypent-2-enoate + H2O. It functions in the pathway isoprenoid biosynthesis; isopentenyl diphosphate biosynthesis via mevalonate pathway. Its function is as follows. Component of a hydro-lyase that catalyzes the dehydration of mevalonate 5-phosphate (MVA5P) to form trans-anhydromevalonate 5-phosphate (tAHMP). Involved in the archaeal mevalonate (MVA) pathway, which provides fundamental precursors for isoprenoid biosynthesis, such as isopentenyl diphosphate (IPP) and dimethylallyl diphosphate (DMAPP). This Thermococcus gammatolerans (strain DSM 15229 / JCM 11827 / EJ3) protein is Phosphomevalonate dehydratase small subunit.